The primary structure comprises 604 residues: Threonine--tRNA ligase (604 aa).

Positions 209–500 (DHRKLGQEMG…LTEHFGGEFP (292 aa)) are catalytic. Residues cysteine 301, histidine 352, and histidine 477 each contribute to the Zn(2+) site.

It belongs to the class-II aminoacyl-tRNA synthetase family. Homodimer. Zn(2+) is required as a cofactor.

It is found in the cytoplasm. The enzyme catalyses tRNA(Thr) + L-threonine + ATP = L-threonyl-tRNA(Thr) + AMP + diphosphate + H(+). Functionally, catalyzes the attachment of threonine to tRNA(Thr) in a two-step reaction: L-threonine is first activated by ATP to form Thr-AMP and then transferred to the acceptor end of tRNA(Thr). Also edits incorrectly charged L-seryl-tRNA(Thr). This is Threonine--tRNA ligase from Helicobacter hepaticus (strain ATCC 51449 / 3B1).